Here is a 488-residue protein sequence, read N- to C-terminus: PTS system mannitol-specific EIICB component (488 aa).

Topologically, residues 1–26 are cytoplasmic; the sequence is MRKKLAKVKVHIQSLDSLLSSMTMPI. The PTS EIIC type-2 domain maps to 15–362; sequence LDSLLSSMTM…LSLTRKKQLK (348 aa). Residues 27 to 48 traverse the membrane as a helical segment; it reads IGIFIAWGLLASFFIPSGWTPD. The Extracellular portion of the chain corresponds to 49–52; sequence KNLA. The helical transmembrane segment at 53–73 threads the bilayer; the sequence is LMVGIGIQYVIPTIIXFFGGK. Topologically, residues 74–147 are cytoplasmic; that stretch reads KIYEIRGGVI…SGFEMLVNNF (74 aa). A helical membrane pass occupies residues 148–169; the sequence is YLGFLGFALIFPSFYLSIYLIG. Residues 170–178 lie on the Extracellular side of the membrane; it reads YIQLGLKLL. Residues 179–199 traverse the membrane as a helical segment; sequence VEIMQQYKLYPIAAIVIEPAK. At 200-289 the chain is on the cytoplasmic side; it reads VLFLNNAINH…VLLKPVLILA (90 aa). Residues 290–309 form a helical membrane-spanning segment; sequence TIAVGVVGNGILQIFNAGTI. At 310–331 the chain is on the extracellular side; it reads APVSPGSVIAGFLQINKTPLDV. A helical transmembrane segment spans residues 332-353; that stretch reads AGYALALVLSAVTSLLISLLLL. Residues 354 to 488 are Cytoplasmic-facing; the sequence is SLTRKKQLKT…IIEKIKNEKN (135 aa). The PTS EIIB type-2 domain occupies 397 to 488; sequence SQVTFVCDAG…IIEKIKNEKN (92 aa). Cysteine 403 functions as the Phosphocysteine intermediate; for EIIB activity in the catalytic mechanism. Cysteine 403 is subject to Phosphocysteine; by EIIA.

In terms of assembly, homodimer.

It localises to the cell membrane. The catalysed reaction is D-mannitol(out) + N(pros)-phospho-L-histidyl-[protein] = D-mannitol 1-phosphate(in) + L-histidyl-[protein]. The phosphoenolpyruvate-dependent sugar phosphotransferase system (sugar PTS), a major carbohydrate active transport system, catalyzes the phosphorylation of incoming sugar substrates concomitantly with their translocation across the cell membrane. The enzyme II CmtAB PTS system is involved in D-mannitol transport. This Mycoplasma pneumoniae (strain ATCC 29342 / M129 / Subtype 1) (Mycoplasmoides pneumoniae) protein is PTS system mannitol-specific EIICB component (mtlA).